A 101-amino-acid polypeptide reads, in one-letter code: Small ribosomal subunit protein bS18c (101 aa).

Residues M1–L19 are compositionally biased toward basic residues. Disordered regions lie at residues M1–G23 and K82–K101.

It belongs to the bacterial ribosomal protein bS18 family. Part of the 30S ribosomal subunit.

The protein localises to the plastid. The protein resides in the chloroplast. This Drimys granadensis protein is Small ribosomal subunit protein bS18c.